We begin with the raw amino-acid sequence, 207 residues long: Large ribosomal subunit protein bL25 (207 aa).

The segment at 185–207 (DLEEETGEAAAEAEAPAEEGAES) is disordered.

It belongs to the bacterial ribosomal protein bL25 family. CTC subfamily. Part of the 50S ribosomal subunit; part of the 5S rRNA/L5/L18/L25 subcomplex. Contacts the 5S rRNA. Binds to the 5S rRNA independently of L5 and L18.

Its function is as follows. This is one of the proteins that binds to the 5S RNA in the ribosome where it forms part of the central protuberance. The protein is Large ribosomal subunit protein bL25 of Rhodococcus jostii (strain RHA1).